A 557-amino-acid polypeptide reads, in one-letter code: Acetylcholine receptor subunit alpha-L1 (557 aa).

A signal peptide spans 1-23; that stretch reads MAAALPPMLLLLLLLLLHHPAAA. At 24–244 the chain is on the extracellular side; it reads NPDAKRLYDD…NITLRRKTLF (221 aa). N-linked (GlcNAc...) asparagine glycosylation occurs at Asn47. 2 disulfides stabilise this stretch: Cys151–Cys165 and Cys224–Cys225. Asn235 is a glycosylation site (N-linked (GlcNAc...) asparagine). Helical transmembrane passes span 245–266, 274–294, and 308–329; these read YTVN…VFYL, IALC…ISEI, and YLLF…VLNV. The Cytoplasmic portion of the chain corresponds to 330-500; the sequence is HYRKPSTHKM…EFDAEDQDWG (171 aa). The helical transmembrane segment at 501-523 threads the bilayer; that stretch reads FVAMVLDRLFLWIFTIASIVGTF.

This sequence belongs to the ligand-gated ion channel (TC 1.A.9) family. Acetylcholine receptor (TC 1.A.9.1) subfamily.

It localises to the postsynaptic cell membrane. The protein resides in the cell membrane. After binding acetylcholine, the AChR responds by an extensive change in conformation that affects all subunits and leads to opening of an ion-conducting channel across the plasma membrane. This is Acetylcholine receptor subunit alpha-L1 from Schistocerca gregaria (Desert locust).